A 1077-amino-acid chain; its full sequence is Tudor domain-containing protein 7 (1077 aa).

HTH OST-type domains follow at residues 1 to 67 (MLRA…YAVV) and 220 to 289 (DLSV…LYST). Over residues 300–328 (VQNHSNNQAKPNVPVDSTPSSPPLQSSGN) the composition is skewed to polar residues. A disordered region spans residues 300-331 (VQNHSNNQAKPNVPVDSTPSSPPLQSSGNIPK). Residues 330-398 (PKDELKQKIS…PFKAILYAKS (69 aa)) form the HTH OST-type 3 domain. 2 consecutive Tudor domains span residues 494-551 (FLRV…FYTL) and 684-741 (LPFC…LLRD). Residues 841 to 883 (SRGGGAQASELSPPGLCKDHTSAVKKPDMQQSSSVPSFNMPPP) are disordered. Residues 857–868 (CKDHTSAVKKPD) are compositionally biased toward basic and acidic residues.

It belongs to the TDRD7 family.

It localises to the cytoplasm. In terms of biological role, component of specific cytoplasmic RNA granules involved in post-transcriptional regulation of specific genes: probably acts by binding to specific mRNAs and regulating their translation. Probably required during spermatogenesis. The sequence is that of Tudor domain-containing protein 7 (tdrd7) from Xenopus tropicalis (Western clawed frog).